Reading from the N-terminus, the 382-residue chain is 3-phytase (382 aa).

An N-terminal signal peptide occupies residues 1–26 (MKVPKTMLLSTAAGLLLSLTATSVSA). One can recognise a BPP domain in the interval 27 to 361 (HYVNEEHHFK…VSWEQIAQHL (335 aa)).

The protein resides in the secreted. The catalysed reaction is 1D-myo-inositol hexakisphosphate + H2O = 1D-myo-inositol 1,2,4,5,6-pentakisphosphate + phosphate. In Bacillus subtilis (strain 168), this protein is 3-phytase (phy).